Reading from the N-terminus, the 502-residue chain is Probable mRNA-splicing protein ubp10 (502 aa).

The UBP-type; degenerate zinc-finger motif lies at 56–153 (SQNLYLDTIN…YVMRPTFTKL (98 aa)). Cys-89, Cys-92, His-108, and His-114 together coordinate Zn(2+). Residues 178-501 (VGMNNIKNND…ESFIQLWERS (324 aa)) form the USP domain.

Belongs to the peptidase C19 family.

Its subcellular location is the nucleus. May play a role in mRNA splicing. It is unsure if the protein really exhibits hydrolase activity. Could be a competitor of ubiquitin C-terminal hydrolases (UCHs). This Schizosaccharomyces pombe (strain 972 / ATCC 24843) (Fission yeast) protein is Probable mRNA-splicing protein ubp10 (ubp10).